Here is a 79-residue protein sequence, read N- to C-terminus: uncharacterized protein (79 aa).

The N-terminal stretch at 1-18 (MQIKNIVAVLATVTAINA) is a signal peptide. Residues 24 to 44 (PNATTPNATQPNATQPNTTLP) are disordered. Asn25, Asn30, Asn35, and Asn40 each carry an N-linked (GlcNAc...) asparagine glycan. A lipid anchor (GPI-anchor amidated glycine) is attached at Gly55. The propeptide at 56–79 (EAVVNTMAAGAFGAAIAAGVAFLF) is removed in mature form.

Its subcellular location is the cell membrane. This is an uncharacterized protein from Saccharomyces cerevisiae (strain ATCC 204508 / S288c) (Baker's yeast).